A 450-amino-acid polypeptide reads, in one-letter code: Signal recognition particle protein (450 aa).

GTP is bound by residues 107-114 (GLQGSGKT), 190-194 (DTAGR), and 248-251 (TKTD).

Belongs to the GTP-binding SRP family. SRP54 subfamily. As to quaternary structure, part of the signal recognition particle protein translocation system, which is composed of SRP and FtsY. SRP is a ribonucleoprotein composed of Ffh and a 4.5S RNA molecule.

The protein localises to the cytoplasm. It carries out the reaction GTP + H2O = GDP + phosphate + H(+). Involved in targeting and insertion of nascent membrane proteins into the cytoplasmic membrane. Binds to the hydrophobic signal sequence of the ribosome-nascent chain (RNC) as it emerges from the ribosomes. The SRP-RNC complex is then targeted to the cytoplasmic membrane where it interacts with the SRP receptor FtsY. Interaction with FtsY leads to the transfer of the RNC complex to the Sec translocase for insertion into the membrane, the hydrolysis of GTP by both Ffh and FtsY, and the dissociation of the SRP-FtsY complex into the individual components. The protein is Signal recognition particle protein of Buchnera aphidicola subsp. Baizongia pistaciae (strain Bp).